A 211-amino-acid polypeptide reads, in one-letter code: Bcl-2-related ovarian killer protein homolog B (211 aa).

The BH4 signature appears at 32–44; it reads KELCRDFIHSRIT. Positions 67–83 match the BH3 motif; sequence VSVVLLKLGDELECMRP. Residues 113–132 carry the BH1 motif; the sequence is EVIAMGITWGKVVAIYAVAA. The BH2 motif lies at 165–179; it reads WLKKRGGWVDILKCV. Residues 190–210 form a helical membrane-spanning segment; it reads WLSTAVLTWREFIKTMYVYLT.

It belongs to the Bcl-2 family. In terms of tissue distribution, expressed strongly in ovary and more weakly in eye. Little expression in other tissues examined.

Its subcellular location is the membrane. Its function is as follows. May play a role in apoptosis. Does not appear to show pro-apoptotic activity when expressed ectopically in early embryos. The protein is Bcl-2-related ovarian killer protein homolog B (bokb) of Danio rerio (Zebrafish).